The following is a 623-amino-acid chain: Bifunctional dihydrofolate reductase-thymidylate synthase (623 aa).

The region spanning 9–237 (DIYAICACCK…TTLDFLVYSK (229 aa)) is the DHFR domain. 13–14 (IC) is a binding site for substrate. NADP(+) contacts are provided by residues Ala15 and 38 to 44 (GLGNKGT). Substrate is bound at residue Asp53. Tandem repeats lie at residues 88 to 91 (GGDN), 94 to 97 (GGDN), and 100 to 103 (GGDN). The tract at residues 88–103 (GGDNTSGGDNTHGGDN) is 3 X 4 AA repeats of G-G-D-N. Residues 115–117 (RSS), 137–139 (SKT), and Asp153 each bind NADP(+). The substrate site is built by Ile173, Tyr179, and Thr194. 174 to 181 (GGAQVYRE) contributes to the NADP(+) binding site. The interval 263 to 309 (TAMRRNVAPRTAAPPMGPHSRANGERAPPRARARRTTPRQRKTTSCT) is disordered. Residues 291–304 (PRARARRTTPRQRK) are compositionally biased toward basic residues. The tract at residues 337–623 (QHPEYQYLGI…HDKITMEMAA (287 aa)) is thymidylate synthase. Position 360 (Arg360) interacts with dUMP. Residue Cys505 is part of the active site. DUMP contacts are provided by residues His506, 524 to 528 (QRSCD), Asn536, and 566 to 568 (HVY).

The protein in the N-terminal section; belongs to the dihydrofolate reductase family. In the C-terminal section; belongs to the thymidylate synthase family. In terms of assembly, homodimer.

It catalyses the reaction (6S)-5,6,7,8-tetrahydrofolate + NADP(+) = 7,8-dihydrofolate + NADPH + H(+). The enzyme catalyses dUMP + (6R)-5,10-methylene-5,6,7,8-tetrahydrofolate = 7,8-dihydrofolate + dTMP. The protein operates within cofactor biosynthesis; tetrahydrofolate biosynthesis; 5,6,7,8-tetrahydrofolate from 7,8-dihydrofolate: step 1/1. Its function is as follows. Bifunctional enzyme. Involved in de novo dTMP biosynthesis. Key enzyme in folate metabolism. Catalyzes an essential reaction for de novo glycine and purine synthesis, DNA precursor synthesis, and for the conversion of dUMP to dTMP. This Plasmodium vivax protein is Bifunctional dihydrofolate reductase-thymidylate synthase.